We begin with the raw amino-acid sequence, 547 residues long: MSLSSLLPTPTNAIWDREDERRLVARGAPKIGALVSAKIAAPPYGQRKDWVPHTDADFGDGGAFPEIHVAQYPLGLGAPGNVGKKSDALAVRLDDKGKVKYDAIARQGHGKDKIVYSSISQLLPAEVLAEDADELQRPDEETVMETTEETRLALEKLTNQKITSALPVRHAQKAGPAQYIRYTPSQQGDTFNSGAKQRVIRMVEAQLDPMEPPKFRINKKIPRGPPSPPAPVLHSPSRKVTVKEQKEWKIPPCISNWKNAKGYTIPLDKRLAADGRGLQQVHINEKFAKMAEALYIADRKAREAVEARSQLEKKLAQKEKEKKEDMLRMMAQRAREERAGLRNPEAAEPSGSGATGSEVRERNDLRAERQRERQRDRNLQRAAPEKRSKLQKERERDISEQIALGLPAKSAGNGETLFDQRLFNTTKGMDSGYGDDEAYNVYDKPWRDSNTLGAHIYRPSKQADSDNYGGDLDAIVNTKRFVPDKQFSGASKEAAAGQRSGPVEFEKEEDPFGLDQFLNMAKKAPKRAEEKNNERSSHSDRKRSKRD.

Residues 177–343 (AQYIRYTPSQ…AREERAGLRN (167 aa)) are SNW. Residues Ser-227 and Ser-235 each carry the phosphoserine modification. Disordered stretches follow at residues 333 to 398 (RARE…ERDI) and 486 to 547 (QFSG…SKRD). Composition is skewed to basic and acidic residues over residues 358-398 (EVRE…ERDI) and 526-539 (KRAEEKNNERSSHS).

The protein belongs to the SNW family.

It is found in the nucleus. Functionally, may play a role in chromatin structure and function. The chain is Puff-specific protein Bx42 (Bx42) from Drosophila melanogaster (Fruit fly).